The primary structure comprises 599 residues: Elongation factor 4 (599 aa).

Residues 2 to 184 (KHIRNFSIIA…RLVRDIPAPE (183 aa)) enclose the tr-type G domain. GTP-binding positions include 14 to 19 (DHGKST) and 131 to 134 (NKID).

This sequence belongs to the TRAFAC class translation factor GTPase superfamily. Classic translation factor GTPase family. LepA subfamily.

The protein resides in the cell inner membrane. It carries out the reaction GTP + H2O = GDP + phosphate + H(+). In terms of biological role, required for accurate and efficient protein synthesis under certain stress conditions. May act as a fidelity factor of the translation reaction, by catalyzing a one-codon backward translocation of tRNAs on improperly translocated ribosomes. Back-translocation proceeds from a post-translocation (POST) complex to a pre-translocation (PRE) complex, thus giving elongation factor G a second chance to translocate the tRNAs correctly. Binds to ribosomes in a GTP-dependent manner. The chain is Elongation factor 4 from Yersinia pestis bv. Antiqua (strain Antiqua).